The chain runs to 937 residues: uncharacterized protein (937 aa).

Position 2 is an N-acetylthreonine (Thr2). Residues 281–937 (NESPSSNINT…KKGKGKGGRK (657 aa)) are disordered. The span at 290–308 (TTTTSTTTTTTTTTSSPVV) shows a compositional bias: low complexity. Residue Thr292 is the Charge relay system of the active site. Basic and acidic residues-rich tracts occupy residues 309–402 (EESK…EKQQ), 411–431 (AEKE…RLEA), 469–489 (AEKE…KLEA), 512–532 (AEKE…KLEA), 600–615 (AEKE…KLEA), 667–687 (AEKE…KLEA), 738–758 (AEKE…RLEA), and 780–872 (AEKE…KVEE). Residues 345-802 (VDDSKEKEEK…KAAEETKVEE (458 aa)) adopt a coiled-coil conformation. Residues 887–897 (EETEEGEEVDE) are compositionally biased toward acidic residues. The span at 898 to 924 (ASNTTTEQTTTNANQPKKPNNNNNNNK) shows a compositional bias: low complexity. Positions 925 to 937 (GKGKKGKGKGGRK) are enriched in basic residues.

The protein belongs to the AB hydrolase superfamily.

This is an uncharacterized protein from Dictyostelium discoideum (Social amoeba).